The following is a 284-amino-acid chain: Nucleotide-binding protein NGK_0463 (284 aa).

8 to 15 (GLSGSGKS) is an ATP binding site. GTP is bound at residue 58–61 (DVRS).

It belongs to the RapZ-like family.

Functionally, displays ATPase and GTPase activities. In Neisseria gonorrhoeae (strain NCCP11945), this protein is Nucleotide-binding protein NGK_0463.